Consider the following 544-residue polypeptide: Methionine--tRNA ligase (544 aa).

The 'HIGH' region signature appears at 10-20; the sequence is PYANGSLHLGH. 4 residues coordinate Zn(2+): cysteine 141, cysteine 144, cysteine 153, and cysteine 156. Residues 329–333 carry the 'KMSKS' region motif; that stretch reads KLSTS. Residue threonine 332 participates in ATP binding.

It belongs to the class-I aminoacyl-tRNA synthetase family. MetG type 1 subfamily. In terms of assembly, monomer. It depends on Zn(2+) as a cofactor.

The protein resides in the cytoplasm. The catalysed reaction is tRNA(Met) + L-methionine + ATP = L-methionyl-tRNA(Met) + AMP + diphosphate. In terms of biological role, is required not only for elongation of protein synthesis but also for the initiation of all mRNA translation through initiator tRNA(fMet) aminoacylation. This Bacillus cereus (strain 03BB102) protein is Methionine--tRNA ligase.